Reading from the N-terminus, the 288-residue chain is NAD(P)H-hydrate epimerase (288 aa).

The N-terminal 32 residues, 1–32, are a transit peptide targeting the mitochondrion; sequence MSGLRALLGLGLLVAGSRLSRVRVQAGSCRAG. At serine 49 the chain carries Phosphoserine. One can recognise a YjeF N-terminal domain in the interval 65 to 275; sequence AQAVDQELFN…ALEKKYQLNL (211 aa). (6S)-NADPHX is bound at residue 119–123; the sequence is NNGGD. K(+) is bound at residue asparagine 120. Position 144 is an N6-succinyllysine (lysine 144). Position 185 (aspartate 185) interacts with K(+). (6S)-NADPHX contacts are provided by residues 189 to 195 and aspartate 218; that span reads GFSFTGE. Serine 221 provides a ligand contact to K(+).

This sequence belongs to the NnrE/AIBP family. In terms of assembly, homodimer. Interacts with APOA1 and APOA2. K(+) serves as cofactor. Undergoes physiological phosphorylation during sperm capacitation, downstream to PKA activation.

Its subcellular location is the mitochondrion. The protein resides in the secreted. The enzyme catalyses (6R)-NADHX = (6S)-NADHX. The catalysed reaction is (6R)-NADPHX = (6S)-NADPHX. In terms of biological role, catalyzes the epimerization of the S- and R-forms of NAD(P)HX, a damaged form of NAD(P)H that is a result of enzymatic or heat-dependent hydration. This is a prerequisite for the S-specific NAD(P)H-hydrate dehydratase to allow the repair of both epimers of NAD(P)HX. Accelerates cholesterol efflux from endothelial cells to high-density lipoprotein (HDL) and thereby regulates angiogenesis. The protein is NAD(P)H-hydrate epimerase of Bos taurus (Bovine).